The primary structure comprises 370 residues: Glutamate 5-kinase (370 aa).

Lysine 17 is an ATP binding site. The substrate site is built by serine 56, aspartate 143, and asparagine 155. Position 175–176 (175–176) interacts with ATP; that stretch reads SD. Positions 280 to 357 constitute a PUA domain; sequence RGTIRVDAGA…AEIVAILGYS (78 aa).

It belongs to the glutamate 5-kinase family.

The protein localises to the cytoplasm. It catalyses the reaction L-glutamate + ATP = L-glutamyl 5-phosphate + ADP. It participates in amino-acid biosynthesis; L-proline biosynthesis; L-glutamate 5-semialdehyde from L-glutamate: step 1/2. Catalyzes the transfer of a phosphate group to glutamate to form L-glutamate 5-phosphate. This Cereibacter sphaeroides (strain ATCC 17023 / DSM 158 / JCM 6121 / CCUG 31486 / LMG 2827 / NBRC 12203 / NCIMB 8253 / ATH 2.4.1.) (Rhodobacter sphaeroides) protein is Glutamate 5-kinase.